A 314-amino-acid chain; its full sequence is MFQPAGHGQDWAMEGPRDGLKKERLVDDRHDSGLDSMKDEEYEQMVKELREIRLQPQEAPLAAEPWKQQLTEDGDSFLHLAIIHEEKPLTMEVIGQVKGDLAFLNFQNNLQQTPLHLAVITNQPGIAEALLKAGCDPELRDFRGNTPLHLACEQGCLASVAVLTQTCTPQHLHSVLQATNYNGHTCLHLASIHGYLAIVEHLVTLGADVNAQEPCNGRTALHLAVDLQNPDLVSLLLKCGADVNRVTYQGYSPYQLTWGRPSTRIQQQLGQLTLENLQMLPESEDEESYDTESEFTEDELPYDDCVFGGQRLTL.

The tract at residues 1-40 (MFQPAGHGQDWAMEGPRDGLKKERLVDDRHDSGLDSMKDE) is disordered. A compositionally biased stretch (basic and acidic residues) spans 15-40 (GPRDGLKKERLVDDRHDSGLDSMKDE). Lys-21 is covalently cross-linked (Glycyl lysine isopeptide (Lys-Gly) (interchain with G-Cter in SUMO); alternate). Lys-21 participates in a covalent cross-link: Glycyl lysine isopeptide (Lys-Gly) (interchain with G-Cter in ubiquitin); alternate. Lys-22 is covalently cross-linked (Glycyl lysine isopeptide (Lys-Gly) (interchain with G-Cter in ubiquitin)). The Destruction motif signature appears at 30 to 36 (HDSGLDS). Ser-32 carries the phosphoserine; by IKKB modification. The residue at position 36 (Ser-36) is a Phosphoserine; by IKKA, IKKB, IKKE and TBK1. Tyr-42 is modified (phosphotyrosine). A Nuclear export signal motif is present at residues 45–54 (MVKELREIRL). ANK repeat units lie at residues 73–103 (DGDS…DLAF), 110–139 (LQQT…DPEL), 143–172 (RGNT…PQHL), 182–211 (NGHT…DVNA), and 216–245 (NGRT…DVNR). Residues 110–120 (LQQTPLHLAVI) carry the Nuclear import signal motif. Residues Asn-210 and Asn-244 each carry the (3S)-3-hydroxyasparagine; by HIF1AN modification. A phosphoserine; by CK2 mark is found at Ser-283 and Ser-288. Thr-291 bears the Phosphothreonine; by CK2 mark. The residue at position 293 (Ser-293) is a Phosphoserine; by CK2. Residue Thr-296 is modified to Phosphothreonine.

The protein belongs to the NF-kappa-B inhibitor family. In terms of assembly, interacts with RELA; the interaction requires the nuclear import signal. Part of a 70-90 kDa complex at least consisting of CHUK, IKBKB, NFKBIA, RELA, ELP1 and MAP3K14. Interacts with NKIRAS1 and NKIRAS2. Interacts with RWDD3; the interaction enhances sumoylation. Interacts with PRMT2. Interacts with PRKACA in platelets; this interaction is disrupted by thrombin and collagen. Interacts with MEFV. Interacts with DDRGK1; positively regulates NFKBIA phosphorylation and degradation. Interacts with HNRNPA2B1; the interaction may be mediated by the RRM2 domain of HNRNPA2B1, and HNRNPA2B1 may interact simultaneously with FAM76B and either NFKBIA or NFKBIE to form a complex. Phosphorylated at Ser-32 and Ser-36 by IKKA/CHUK and IKKB/IKBKB; disables inhibition of NF-kappa-B DNA-binding activity. Phosphorylation at positions 32 and 36 is prerequisite to recognition by the SCF(FBXW11) and SCF(BTRC) complexes, leading to polyubiquitination and subsequent degradation. Post-translationally, polyubiquitinated at Lys-21 and/or Lys-22 following phosphorylation at Ser-32 and Ser-36. Monoubiquitinated at Lys-21 and/or Lys-22 by UBE2D3. Ubiquitin chain elongation is then performed by CDC34 in cooperation with the SCF(FBXW11) E3 ligase complex, building ubiquitin chains from the UBE2D3-primed NFKBIA-linked ubiquitin. The resulting polyubiquitination leads to protein degradation. Also ubiquitinated by the SCF(BTRC) complex following stimulus-dependent phosphorylation at Ser-32 and Ser-36. Deubiquitinated by USP38, leading to NF-kappa-B inhibition. In terms of processing, sumoylated; sumoylation requires the presence of the nuclear import signal. Sumoylation blocks ubiquitination and proteasome-mediated degradation of the protein thereby increasing the protein stability. Hydroxylated by HIF1AN. Highly expressed in lymph node, thymus followed by liver, brain, muscle, kidney, gastrointestinal and reproductive tract.

Its subcellular location is the cytoplasm. It localises to the nucleus. Inhibits the activity of dimeric NF-kappa-B/REL complexes by trapping REL (RELA/p65 and NFKB1/p50) dimers in the cytoplasm by masking their nuclear localization signals. On cellular stimulation by immune and pro-inflammatory responses, becomes phosphorylated promoting ubiquitination and degradation, enabling the dimeric RELA to translocate to the nucleus and activate transcription. The chain is NF-kappa-B inhibitor alpha (Nfkbia) from Mus musculus (Mouse).